A 118-amino-acid polypeptide reads, in one-letter code: Large ribosomal subunit protein bL20 (118 aa).

It belongs to the bacterial ribosomal protein bL20 family.

Functionally, binds directly to 23S ribosomal RNA and is necessary for the in vitro assembly process of the 50S ribosomal subunit. It is not involved in the protein synthesizing functions of that subunit. The protein is Large ribosomal subunit protein bL20 of Yersinia enterocolitica serotype O:8 / biotype 1B (strain NCTC 13174 / 8081).